A 639-amino-acid chain; its full sequence is Threonine--tRNA ligase (639 aa).

The 61-residue stretch at 1–61 (MINITLKDGK…KEDSELEILT (61 aa)) folds into the TGS domain. A catalytic region spans residues 242–532 (DHRKLGKELD…LIEHFAGAFP (291 aa)). Residues Cys333, His384, and His509 each coordinate Zn(2+).

Belongs to the class-II aminoacyl-tRNA synthetase family. In terms of assembly, homodimer. The cofactor is Zn(2+).

It localises to the cytoplasm. The catalysed reaction is tRNA(Thr) + L-threonine + ATP = L-threonyl-tRNA(Thr) + AMP + diphosphate + H(+). Functionally, catalyzes the attachment of threonine to tRNA(Thr) in a two-step reaction: L-threonine is first activated by ATP to form Thr-AMP and then transferred to the acceptor end of tRNA(Thr). Also edits incorrectly charged L-seryl-tRNA(Thr). This chain is Threonine--tRNA ligase, found in Clostridium tetani (strain Massachusetts / E88).